Reading from the N-terminus, the 423-residue chain is Glutamate-1-semialdehyde 2,1-aminomutase (423 aa).

Lys259 bears the N6-(pyridoxal phosphate)lysine mark.

The protein belongs to the class-III pyridoxal-phosphate-dependent aminotransferase family. HemL subfamily. Homodimer. Requires pyridoxal 5'-phosphate as cofactor.

Its subcellular location is the cytoplasm. It carries out the reaction (S)-4-amino-5-oxopentanoate = 5-aminolevulinate. The protein operates within porphyrin-containing compound metabolism; protoporphyrin-IX biosynthesis; 5-aminolevulinate from L-glutamyl-tRNA(Glu): step 2/2. This Thermosipho melanesiensis (strain DSM 12029 / CIP 104789 / BI429) protein is Glutamate-1-semialdehyde 2,1-aminomutase.